A 1141-amino-acid polypeptide reads, in one-letter code: MDDSGELGGLETMETLTELGDELTLGDIDEMLQFVSNQVGEFPDLFSEQLCSSFPGSGGSGSSSGSSGSSSSSSNGRGSSSGAVDPSVQRSFTQVTLPSFSPSAASPQAPTLQVKVSPTSVPTTPRATPILQPRPQPQPQPQTQLQQQTVMITPTFSTTPQTRIIQQPLIYQNAATSFQVLQPQVQSLVTSSQVQPVTIQQQVQTVQAQRVLTQTANGTLQTLAPATVQTVAAPQVQQVPVLVQPQIIKTDSLVLTTLKTDGSPVMAAVQNPALTALTTPIQTAALQVPTLVGSSGTILTTMPVMMGQEKVPIKQVPGGVKQLEPPKEGERRTTHNIIEKRYRSSINDKIIELKDLVMGTDAKMHKSGVLRKAIDYIKYLQQVNHKLRQENMVLKLANQKNKLLKGIDLGSLVDNEVDLKIEDFNQNVLLMSPPASDSGSQAGFSPYSIDSEPGSPLLDDAKVKDEPDSPPVALGMVDRSRILLCVLTFLCLSFNPLTSLLQWGGAHDSDQHPHSGSGRSVLSFESGSGGWFDWMMPTLLLWLVNGVIVLSVFVKLLVHGEPVIRPHSRSSVTFWRHRKQADLDLARGDFAAAAGNLQTCLAVLGRALPTSRLDLACSLSWNVIRYSLQKLRLVRWLLKKVFQCRRATPATEAGFEDEAKTSARDAALAYHRLHQLHITGKLPAGSACSDVHMALCAVNLAECAEEKIPPSTLVEIHLTAAMGLKTRCGGKLGFLASYFLSRAQSLCGPEHSAVPDSLRWLCHPLGQKFFMERSWSVKSAAKESLYCAQRNPADPIAQVHQAFCKNLLERAIESLVKPQAKKKAGDQEEESCEFSSALEYLKLLHSFVDSVGVMSPPLSRSSVLKSALGPDIICRWWTSAITVAISWLQGDDAAVRSHFTKVERIPKALEVTESPLVKAIFHACRAMHASLPGKADGQQSSFCHCERASGHLWSSLNVSGATSDPALNHVVQLLTCDLLLSLRTALWQKQASASQAVGETYHASGAELAGFQRDLGSLRRLAHSFRPAYRKVFLHEATVRLMAGASPTRTHQLLEHSLRRRTTQSTKHGEVDAWPGQRERATAILLACRHLPLSFLSSPGQRAVLLAEAARTLEKVGDRRSCNDCQQMIVKLGGGTAIAAS.

Positions 1 to 50 are transcriptional activation (acidic); that stretch reads MDDSGELGGLETMETLTELGDELTLGDIDEMLQFVSNQVGEFPDLFSEQL. The Cytoplasmic portion of the chain corresponds to 1–479; that stretch reads MDDSGELGGL…PPVALGMVDR (479 aa). The interval 48–144 is disordered; the sequence is EQLCSSFPGS…PQPQPQPQTQ (97 aa). The segment covering 63 to 82 has biased composition (low complexity); it reads SSGSSGSSSSSSNGRGSSSG. Residues 88–97 are compositionally biased toward polar residues; the sequence is VQRSFTQVTL. Residues 98 to 110 show a composition bias toward low complexity; that stretch reads PSFSPSAASPQAP. The segment covering 114-126 has biased composition (polar residues); the sequence is VKVSPTSVPTTPR. An interaction with LMNA region spans residues 237-491; the sequence is QQVPVLVQPQ…ILLCVLTFLC (255 aa). Residues 330–380 form the bHLH domain; it reads ERRTTHNIIEKRYRSSINDKIIELKDLVMGTDAKMHKSGVLRKAIDYIKYL. The interval 380–401 is leucine-zipper; the sequence is LQQVNHKLRQENMVLKLANQKN. Lysine 464 is covalently cross-linked (Glycyl lysine isopeptide (Lys-Gly) (interchain with G-Cter in SUMO2)). The helical transmembrane segment at 480–500 threads the bilayer; the sequence is SRILLCVLTFLCLSFNPLTSL. The Lumenal segment spans residues 501–533; it reads LQWGGAHDSDQHPHSGSGRSVLSFESGSGGWFD. A helical transmembrane segment spans residues 534 to 554; sequence WMMPTLLLWLVNGVIVLSVFV. The Cytoplasmic portion of the chain corresponds to 555–1139; the sequence is KLLVHGEPVI…VKLGGGTAIA (585 aa). 2 positions are modified to phosphoserine: serine 855 and serine 1098.

It belongs to the SREBP family. As to quaternary structure, forms a tight complex with SCAP, the SCAP-SREBP complex, in the endoplasmic reticulum membrane and the Golgi apparatus. Interacts with PAQR3; the interaction anchors the SCAP-SREBP complex to the Golgi apparatus in low cholesterol conditions. Interacts (via C-terminal domain) with RNF139. Homodimer; efficient DNA binding of the soluble transcription factor fragment requires dimerization with another bHLH protein. Interacts with LMNA. Post-translationally, processed in the Golgi apparatus, releasing the protein from the membrane. At low cholesterol the SCAP-SREBP complex is recruited into COPII vesicles for export from the endoplasmic reticulum. In the Golgi, complex SREBPs are cleaved sequentially by site-1 (MBTPS1, S1P) and site-2 (MBTPS2, S2P) protease. The first cleavage by site-1 protease occurs within the luminal loop, the second cleavage by site-2 protease occurs within the first transmembrane domain, releasing the transcription factor from the Golgi membrane. Apoptosis triggers cleavage by the cysteine proteases caspase-3 and caspase-7. Cleavage and activation is induced by mediated cholesterol efflux. In terms of processing, phosphorylated by AMPK, leading to suppress protein processing and nuclear translocation, and repress target gene expression. SCAP-free SREBF2 is ubiquitinated by the BCR(ARMC5) complex, leading to its degradation. Post-translationally, ubiquitinated; the nuclear form has a rapid turnover and is rapidly ubiquitinated and degraded by the proteasome in the nucleus. Ubiquitously expressed in adult and fetal tissues.

It localises to the endoplasmic reticulum membrane. The protein resides in the golgi apparatus membrane. Its subcellular location is the cytoplasmic vesicle. The protein localises to the COPII-coated vesicle membrane. It is found in the nucleus. With respect to regulation, activation by cleavage is down-regulated upon activation of SIRT3-dependent PRKAA1/AMPK-alpha signaling cascade which leads to inhibition of ATP-consuming lipogenesis to restore cellular energy balance. In terms of biological role, precursor of the transcription factor form (Processed sterol regulatory element-binding protein 2), which is embedded in the endoplasmic reticulum membrane. Low sterol concentrations promote processing of this form, releasing the transcription factor form that translocates into the nucleus and activates transcription of genes involved in cholesterol biosynthesis. Its function is as follows. Key transcription factor that regulates expression of genes involved in cholesterol biosynthesis. Binds to the sterol regulatory element 1 (SRE-1) (5'-ATCACCCCAC-3'). Has dual sequence specificity binding to both an E-box motif (5'-ATCACGTGA-3') and to SRE-1 (5'-ATCACCCCAC-3'). Regulates transcription of genes related to cholesterol synthesis pathway. In Homo sapiens (Human), this protein is Sterol regulatory element-binding protein 2.